A 347-amino-acid chain; its full sequence is Phenylalanine--tRNA ligase alpha subunit (347 aa).

Glu-261 is a binding site for Mg(2+).

It belongs to the class-II aminoacyl-tRNA synthetase family. Phe-tRNA synthetase alpha subunit type 1 subfamily. In terms of assembly, tetramer of two alpha and two beta subunits. The cofactor is Mg(2+).

The protein localises to the cytoplasm. It carries out the reaction tRNA(Phe) + L-phenylalanine + ATP = L-phenylalanyl-tRNA(Phe) + AMP + diphosphate + H(+). This chain is Phenylalanine--tRNA ligase alpha subunit, found in Streptococcus pyogenes serotype M18 (strain MGAS8232).